The sequence spans 307 residues: MSITAAQVKELRELSGAGMMDCKAALAETNGDMEAAVDWLRKKGIAKADKKAGRTAAEGLIGVVSQDLSAVLVEINSETDFVARNDVFQDIVRNVATAALGTEGSIDAVCASFYPGSEKTVEATIKDAIATIGENMTFRRSAKLSVEDGVVATYIHNSVAEGLGKLGVLVAIETTGNKKAAAAFGRQVAMHIAATNPLALTAEDVDSSAIEREKAIFSEQARQSGKPENIIEKMVEGRMRKFFEEVVLLSQAFVMNPDITVDAALKDAEKSIGAPAKITAFIRFALGEGVEKEESDFAAEVAAAAKG.

The tract at residues 79–82 is involved in Mg(2+) ion dislocation from EF-Tu; that stretch reads TDFV.

This sequence belongs to the EF-Ts family.

It localises to the cytoplasm. Its function is as follows. Associates with the EF-Tu.GDP complex and induces the exchange of GDP to GTP. It remains bound to the aminoacyl-tRNA.EF-Tu.GTP complex up to the GTP hydrolysis stage on the ribosome. The polypeptide is Elongation factor Ts (Bartonella henselae (strain ATCC 49882 / DSM 28221 / CCUG 30454 / Houston 1) (Rochalimaea henselae)).